The primary structure comprises 100 residues: Tachykinin-4 (100 aa).

The signal sequence occupies residues 1 to 19; it reads MPSSVTLLLLMGLSVCTSA. 2 consecutive propeptides follow at residues 20-55 and 85-100; these read EDGG…LQEV and RASS…QGAE. Residues 80–100 form a disordered region; the sequence is GLLGRRASSTKGSVDEDQGAE.

Belongs to the tachykinin family.

The protein localises to the secreted. Functionally, tachykinins are active peptides which excite neurons, evoke behavioral responses, are potent vasodilators and secretagogues, and contract (directly or indirectly) many smooth muscles. This is Tachykinin-4 from Oryctolagus cuniculus (Rabbit).